The sequence spans 105 residues: Large ribosomal subunit protein bL21 (105 aa).

It belongs to the bacterial ribosomal protein bL21 family. In terms of assembly, part of the 50S ribosomal subunit. Contacts protein L20.

Functionally, this protein binds to 23S rRNA in the presence of protein L20. This chain is Large ribosomal subunit protein bL21, found in Rickettsia peacockii (strain Rustic).